Here is a 318-residue protein sequence, read N- to C-terminus: NADH-ubiquinone oxidoreductase chain 1 (318 aa).

8 helical membrane passes run 2-22, 70-90, 100-120, 146-166, 171-191, 222-242, 253-273, and 294-314; these read FTIN…FLTL, MFII…VPLP, LGVL…LWSG, LAII…STLI, HLWL…STLA, LFFM…TILF, ELYT…FLWI, and LPLT…MSSI.

The protein belongs to the complex I subunit 1 family.

The protein resides in the mitochondrion inner membrane. The catalysed reaction is a ubiquinone + NADH + 5 H(+)(in) = a ubiquinol + NAD(+) + 4 H(+)(out). In terms of biological role, core subunit of the mitochondrial membrane respiratory chain NADH dehydrogenase (Complex I) that is believed to belong to the minimal assembly required for catalysis. Complex I functions in the transfer of electrons from NADH to the respiratory chain. The immediate electron acceptor for the enzyme is believed to be ubiquinone. In Rhinoceros unicornis (Greater Indian rhinoceros), this protein is NADH-ubiquinone oxidoreductase chain 1 (MT-ND1).